Reading from the N-terminus, the 547-residue chain is Rho GTPase-activating protein 36 (547 aa).

The first 40 residues, 1-40 (MGGCNPFLKAARTLCPRIMPPLLFLSAFIFLVNVLGGAPG), serve as a signal peptide directing secretion. A Rho-GAP domain is found at 226–426 (MSLNPIAKQI…AMIDNWDILF (201 aa)). The segment at 493 to 547 (FDEGSSEEPAVPPGTAHSHDDEEGAGNPPIPEQDRPLLRVPREKQAKTGIGYFFP) is disordered. Residues 524-538 (EQDRPLLRVPREKQA) show a composition bias toward basic and acidic residues.

In terms of biological role, GTPase activator for the Rho-type GTPases by converting them to an inactive GDP-bound state. In Ailuropoda melanoleuca (Giant panda), this protein is Rho GTPase-activating protein 36 (ARHGAP36).